The sequence spans 175 residues: Ribosome maturation factor RimM (175 aa).

Residues 96 to 172 (PDTYYDHQLE…LIEIDPPDGL (77 aa)) enclose the PRC barrel domain.

This sequence belongs to the RimM family. Binds ribosomal protein uS19.

The protein localises to the cytoplasm. Its function is as follows. An accessory protein needed during the final step in the assembly of 30S ribosomal subunit, possibly for assembly of the head region. Essential for efficient processing of 16S rRNA. May be needed both before and after RbfA during the maturation of 16S rRNA. It has affinity for free ribosomal 30S subunits but not for 70S ribosomes. The protein is Ribosome maturation factor RimM of Mycobacterium avium (strain 104).